Consider the following 299-residue polypeptide: Protease HtpX homolog (299 aa).

2 helical membrane-spanning segments follow: residues 15–35 (ILLLVFFLLLALVGYAVGYLF) and 39–59 (GLGGLVIALIIGFIYALSMIF). Histidine 143 is a binding site for Zn(2+). Glutamate 144 is a catalytic residue. Position 147 (histidine 147) interacts with Zn(2+). 2 helical membrane passes run 158-178 (IAVALVSAITMLSGMAGRMMW) and 198-218 (IIMLVVSLLAIVLAPLAATLV). A Zn(2+)-binding site is contributed by glutamate 227.

Belongs to the peptidase M48B family. Zn(2+) is required as a cofactor.

Its subcellular location is the cell membrane. This Streptococcus pneumoniae (strain Hungary19A-6) protein is Protease HtpX homolog.